Consider the following 93-residue polypeptide: Integration host factor subunit beta (93 aa).

This sequence belongs to the bacterial histone-like protein family. As to quaternary structure, heterodimer of an alpha and a beta chain.

This protein is one of the two subunits of integration host factor, a specific DNA-binding protein that functions in genetic recombination as well as in transcriptional and translational control. This chain is Integration host factor subunit beta, found in Cereibacter sphaeroides (strain KD131 / KCTC 12085) (Rhodobacter sphaeroides).